Here is a 221-residue protein sequence, read N- to C-terminus: uncharacterized protein (221 aa).

Residues 33–167 (RPAKSAVMLY…VSPGANLELL (135 aa)) form the MOSC domain.

This is an uncharacterized protein from Bacillus subtilis (strain 168).